The sequence spans 631 residues: PTS system beta-glucoside-specific EIIBCA component (631 aa).

The 86-residue stretch at 1–86 (MNYETLASEI…LSLDGMARFS (86 aa)) folds into the PTS EIIB type-1 domain. Cys-26 functions as the Phosphocysteine intermediate; for EIIB activity in the catalytic mechanism. The region spanning 105–466 (DIISSIFTPF…DETQPAAADS (362 aa)) is the PTS EIIC type-1 domain. Transmembrane regions (helical) follow at residues 120–140 (ATGI…ISES), 146–166 (LLFA…GYTA), 175–195 (FTTL…AFNA), 206–226 (FLGI…ILFA), 248–268 (FFTP…LIGP), 295–315 (VMGA…FVPL), 328–348 (LLPL…GVLL), 358–378 (IAGS…VYGV), 385–405 (PFIF…YAHT), and 434–454 (AVIG…SFGV). The 105-residue stretch at 501 to 605 (DRTFASGVMG…DLTTPIVITN (105 aa)) folds into the PTS EIIA type-1 domain. The active-site Tele-phosphohistidine intermediate; for EIIA activity is His-553.

It localises to the cell inner membrane. Functionally, the phosphoenolpyruvate-dependent sugar phosphotransferase system (sugar PTS), a major carbohydrate active -transport system, catalyzes the phosphorylation of incoming sugar substrates concomitantly with their translocation across the cell membrane. This system is involved in beta-glucoside transport. In terms of biological role, acts both as a kinase and as a phosphatase on ArbG. The polypeptide is PTS system beta-glucoside-specific EIIBCA component (arbF) (Dickeya chrysanthemi (Pectobacterium chrysanthemi)).